A 778-amino-acid chain; its full sequence is Dynein axonemal intermediate chain 4 (778 aa).

6 WD repeats span residues 477 to 517 (HCES…QTPI), 526 to 573 (LHTS…ECVD), 586 to 629 (RHIS…QYLE), 633 to 673 (AHKR…PVMG), 676 to 715 (SGQRVVFDIMWSPHCATVFGAVSEGKVEIWDLRVSSLDPT), and 721 to 760 (SPGVNPTALLFSPETDCVLVGDSEGQVTVYKLKNITAGGG).

As to quaternary structure, part of the multisubunit axonemal dynein complex formed at least of two heavy chains and a number of intermediate and light chains.

The protein resides in the cytoplasm. It localises to the cytoskeleton. It is found in the flagellum axoneme. The protein localises to the cilium axoneme. Its subcellular location is the dynein axonemal particle. Functionally, plays a critical role in the assembly of axonemal dynein complex. Plays a key role in ciliary motility. This Danio rerio (Zebrafish) protein is Dynein axonemal intermediate chain 4.